Reading from the N-terminus, the 630-residue chain is Differentially expressed in FDCP 6 (630 aa).

Tyrosine 210 bears the Phosphotyrosine mark. In terms of domain architecture, PH spans 216–312 (DVLKQGYLWK…WTAAIQTAIR (97 aa)). Position 225 is an N6-acetyllysine (lysine 225). 3 disordered regions span residues 318–341 (KTSL…RRRA), 378–418 (LQEE…ELKK), and 552–630 (HPIE…APGN). 2 stretches are compositionally biased toward basic and acidic residues: residues 331–341 (EQREQRERRRA) and 378–392 (LQEE…HKEL). The segment covering 588–606 (WGSQGNRTLSVNSSEQKSL) has biased composition (polar residues). Phosphoserine is present on serine 590. A compositionally biased stretch (basic and acidic residues) spans 620–630 (QEEKLDPAPGN).

Interacts with IRF4, activated RAC1 and F-actin. Both the phosphorylated and non-phosphorylated forms bind phosphatidylinositol 3,4,5-trisphosphate (PtdInsP3). Interacts with ZAP70. Interacts with RAB11A. In terms of processing, tyrosine-phosphorylated by tyrosine-protein kinase LCK in response to T-cell activation. Thymus.

It is found in the cytoplasm. The protein resides in the cell membrane. The protein localises to the nucleus. It localises to the cytoskeleton. Its subcellular location is the perinuclear region. It is found in the cell projection. The protein resides in the filopodium. Phosphatidylinositol 3,4,5-trisphosphate-dependent guanine nucleotide exchange factor (GEF) which plays a role in the activation of Rho GTPases RAC1, RhoA and CDC42. Can regulate cell morphology in cooperation with activated RAC1. Involved in immune homeostasis by ensuring proper trafficking and availability of T-cell regulator CTLA-4 at T-cell surface. Plays a role in Th2 (T helper cells) development and/or activation, perhaps by interfering with ZAP70 signaling. Required for optimal T-cell effector function, lymphocyte homeostasis and the prevention of systemic autoimmunity. The protein is Differentially expressed in FDCP 6 (Def6) of Mus musculus (Mouse).